A 179-amino-acid chain; its full sequence is Large ribosomal subunit protein uL5 (179 aa).

This sequence belongs to the universal ribosomal protein uL5 family. Part of the 50S ribosomal subunit; part of the 5S rRNA/L5/L18/L25 subcomplex. Contacts the 5S rRNA and the P site tRNA. Forms a bridge to the 30S subunit in the 70S ribosome.

This is one of the proteins that bind and probably mediate the attachment of the 5S RNA into the large ribosomal subunit, where it forms part of the central protuberance. In the 70S ribosome it contacts protein S13 of the 30S subunit (bridge B1b), connecting the 2 subunits; this bridge is implicated in subunit movement. Contacts the P site tRNA; the 5S rRNA and some of its associated proteins might help stabilize positioning of ribosome-bound tRNAs. The protein is Large ribosomal subunit protein uL5 of Shewanella pealeana (strain ATCC 700345 / ANG-SQ1).